Consider the following 92-residue polypeptide: Plasmid copy control protein CopR (92 aa).

Residues 1–27 (MELAFRESLKKMRGTKSKEKFSQELEM) show a composition bias toward basic and acidic residues. Disordered stretches follow at residues 1 to 40 (MELA…SGKS) and 63 to 92 (IPNE…NDFV). The 54-residue stretch at 9-62 (LKKMRGTKSKEKFSQELEMSRSNYSRIESGKSDPTIKTLEQIVKLTNSTLVVDL) folds into the HTH cro/C1-type domain. The segment at residues 20–39 (KFSQELEMSRSNYSRIESGK) is a DNA-binding region (H-T-H motif).

In terms of biological role, involved in copy control of plasmid pIP501. This chain is Plasmid copy control protein CopR (copR), found in Streptococcus agalactiae.